A 318-amino-acid polypeptide reads, in one-letter code: Ornithine carbamoyltransferase (318 aa).

Residues 63-66 (STRT), Gln90, Arg114, and 141-144 (HPCQ) contribute to the carbamoyl phosphate site. Residues Asn172, Asp235, and 239-240 (SM) contribute to the L-ornithine site. Residues 275–276 (CL) and Arg303 each bind carbamoyl phosphate.

The protein belongs to the aspartate/ornithine carbamoyltransferase superfamily. OTCase family.

The protein resides in the cytoplasm. It catalyses the reaction carbamoyl phosphate + L-ornithine = L-citrulline + phosphate + H(+). The protein operates within amino-acid biosynthesis; L-arginine biosynthesis; L-arginine from L-ornithine and carbamoyl phosphate: step 1/3. Functionally, reversibly catalyzes the transfer of the carbamoyl group from carbamoyl phosphate (CP) to the N(epsilon) atom of ornithine (ORN) to produce L-citrulline. The protein is Ornithine carbamoyltransferase of Parasynechococcus marenigrum (strain WH8102).